We begin with the raw amino-acid sequence, 150 residues long: MRVLVQRVSQAAVTVDGQTSGEIGAGALLLVGIEESDGPDDIGWLVRKISQLRIFNDEAGVMNRSLIDCGGEALAVSQFTLHASVKKGNRPSYSRAARGEISRPLFDRFVAELSAALGKTVPTGVFGADMRVSLVNDGPVTIWLDSRNPE.

The short motif at 138–139 (GP) is the Gly-cisPro motif, important for rejection of L-amino acids element.

The protein belongs to the DTD family. Homodimer.

Its subcellular location is the cytoplasm. The catalysed reaction is glycyl-tRNA(Ala) + H2O = tRNA(Ala) + glycine + H(+). The enzyme catalyses a D-aminoacyl-tRNA + H2O = a tRNA + a D-alpha-amino acid + H(+). In terms of biological role, an aminoacyl-tRNA editing enzyme that deacylates mischarged D-aminoacyl-tRNAs. Also deacylates mischarged glycyl-tRNA(Ala), protecting cells against glycine mischarging by AlaRS. Acts via tRNA-based rather than protein-based catalysis; rejects L-amino acids rather than detecting D-amino acids in the active site. By recycling D-aminoacyl-tRNA to D-amino acids and free tRNA molecules, this enzyme counteracts the toxicity associated with the formation of D-aminoacyl-tRNA entities in vivo and helps enforce protein L-homochirality. This Chromobacterium violaceum (strain ATCC 12472 / DSM 30191 / JCM 1249 / CCUG 213 / NBRC 12614 / NCIMB 9131 / NCTC 9757 / MK) protein is D-aminoacyl-tRNA deacylase.